A 462-amino-acid polypeptide reads, in one-letter code: PTS system mannitol-specific cryptic EIICB component (462 aa).

Residues 1-24 (MENKSARAKVQAFGGFLTAMVIPN) are Cytoplasmic-facing. The PTS EIIC type-2 domain occupies 13–344 (FGGFLTAMVI…LKMEKTVETE (332 aa)). A helical transmembrane segment spans residues 25 to 46 (IGAFIAWGFITALFIPTGWLPN). The Periplasmic portion of the chain corresponds to 47–50 (EHFA). Residues 51–71 (KIVGPMITYLLPVMIGSTGGH) form a helical membrane-spanning segment. The Cytoplasmic portion of the chain corresponds to 72–134 (LVGGKRGAVM…AGFEMVINNF (63 aa)). A helical transmembrane segment spans residues 135–156 (SLGIAGMLLCLLGFEVIGPAVL). Topologically, residues 157–165 (IANTFVKEC) are periplasmic. The chain crosses the membrane as a helical span at residues 166 to 186 (IEALVHAGYLPLLSVINEPAK). The Cytoplasmic segment spans residues 187 to 273 (VLFLNNAIDQ…VLMKPLTIIA (87 aa)). A helical membrane pass occupies residues 274–293 (MIAGGMSGTWMFNLLDGGLV). At 294 to 313 (AGPSPGSIFAYLALTPKGSF) the chain is on the periplasmic side. A helical transmembrane segment spans residues 314–335 (LATIAGVTVGTLVSFAITSLIL). At 336 to 462 (KMEKTVETES…FNQLTAEHKH (127 aa)) the chain is on the cytoplasmic side. One can recognise a PTS EIIB type-2 domain in the interval 371–461 (KRIAFVCDAG…LFNQLTAEHK (91 aa)). The Phosphocysteine intermediate; for EIIB activity role is filled by C377. Residue C377 is modified to Phosphocysteine; by EIIA.

The protein localises to the cell inner membrane. It catalyses the reaction D-mannitol(out) + N(pros)-phospho-L-histidyl-[protein] = D-mannitol 1-phosphate(in) + L-histidyl-[protein]. Its function is as follows. The phosphoenolpyruvate-dependent sugar phosphotransferase system (sugar PTS), a major carbohydrate active transport system, catalyzes the phosphorylation of incoming sugar substrates concomitantly with their translocation across the cell membrane. The enzyme II CmtAB PTS system is involved in D-mannitol transport. This is PTS system mannitol-specific cryptic EIICB component (cmtA) from Escherichia coli O157:H7.